A 771-amino-acid polypeptide reads, in one-letter code: Beta-glucan synthesis-associated protein SKN1 (771 aa).

Over residues 1–11 (MSVRNLTNNRH) the composition is skewed to polar residues. 2 disordered regions span residues 1–112 (MSVR…QRMS) and 126–186 (ANNL…PFDR). At 1–289 (MSVRNLTNNR…DDFKHMDRRS (289 aa)) the chain is on the cytoplasmic side. Positions 14 to 37 (SENSVSGSENSFYSSNEQSRQSSS) are enriched in low complexity. 10 positions are modified to phosphoserine: Ser-56, Ser-65, Ser-67, Ser-92, Ser-103, Ser-142, Ser-162, Ser-165, Ser-170, and Ser-176. Low complexity predominate over residues 76 to 93 (NEYSSSSSINYNNDPNSD). Low complexity-rich tracts occupy residues 126-152 (ANNLNNHNNNNYKNIISSSNDNSFASH) and 159-177 (NLPSHPSSNNMSSFSNNSL). A helical; Signal-anchor for type II membrane protein transmembrane segment spans residues 290–310 (FLGLLGILFLFMAGIFIFIVL). Residues 311-771 (PAITFSGVVY…GCSSSKFSLS (461 aa)) are Lumenal-facing. 6 N-linked (GlcNAc...) asparagine glycosylation sites follow: Asn-337, Asn-426, Asn-513, Asn-590, Asn-615, and Asn-743. One can recognise a GH16 domain in the interval 353–716 (AIRTTLVDPD…YVRLYQPKGS (364 aa)).

Belongs to the SKN1/KRE6 family.

It localises to the membrane. Its function is as follows. Required for synthesis of the major beta-glucans of the yeast cell wall. This Saccharomyces cerevisiae (strain ATCC 204508 / S288c) (Baker's yeast) protein is Beta-glucan synthesis-associated protein SKN1 (SKN1).